Reading from the N-terminus, the 625-residue chain is MSVLVRLTSKIASLAKSGRIASARQVFDGMPELDTVAWNTMLTSYSRLGLHQEAIALFTQLRFSDAKPDDYSFTAILSTCASLGNVKFGRKIQSLVIRSGFCASLPVNNSLIDMYGKCSDTLSANKVFRDMCCDSRNEVTWCSLLFAYMNAEQFEAALDVFVEMPKRVAFAWNIMISGHAHCGKLESCLSLFKEMLESEFKPDCYTFSSLMNACSADSSNVVYGRMVHAVMLKNGWSSAVEAKNSVLSFYTKLGSRDDAMRELESIEVLTQVSWNSIIDACMKIGETEKALEVFHLAPEKNIVTWTTMITGYGRNGDGEQALRFFVEMMKSGVDSDHFAYGAVLHACSGLALLGHGKMIHGCLIHCGFQGYAYVGNALVNLYAKCGDIKEADRAFGDIANKDLVSWNTMLFAFGVHGLADQALKLYDNMIASGIKPDNVTFIGLLTTCSHSGLVEEGCMIFESMVKDYRIPLEVDHVTCMIDMFGRGGHLAEAKDLATTYSSLVTDSSNNSSWETLLGACSTHWHTELGREVSKVLKIAEPSEEMSFVLLSNLYCSTGRWKEGEDVRREMVERGMKKTPGCSWIEVGNQVSTFVVGDSSHPRLEELSETLNCLQHEMRNPETFGP.

The transit peptide at 1 to 7 (MSVLVRL) directs the protein to the mitochondrion. 15 PPR repeats span residues 3-33 (VLVR…MPEL), 34-68 (DTVA…DAKP), 69-103 (DDYS…GFCA), 104-134 (SLPV…MCCD), 137-167 (NEVT…MPKR), 168-202 (VAFA…EFKP), 203-238 (DCYT…GWSS), 239-269 (AVEA…IEVL), 270-300 (TQVS…APEK), 301-335 (NIVT…GVDS), 336-370 (DHFA…GFQG), 371-401 (YAYV…IANK), 402-436 (DLVS…GIKP), 437-471 (DNVT…YRIP), and 473-503 (EVDH…YSSL). Positions 512 to 587 (SWETLLGACS…TPGCSWIEVG (76 aa)) are type E motif. Residues 588–618 (NQVSTFVVGDSSHPRLEELSETLNCLQHEMR) form a type E(+) motif region.

It belongs to the PPR family. PCMP-E subfamily.

Its subcellular location is the mitochondrion. This is Pentatricopeptide repeat-containing protein At2g36980, mitochondrial (PCMP-E73) from Arabidopsis thaliana (Mouse-ear cress).